A 447-amino-acid chain; its full sequence is Ribosomal protein uS12 methylthiotransferase RimO (447 aa).

The MTTase N-terminal domain occupies 4 to 114 (PKVGFVSLGC…VMEAVHEYVP (111 aa)). [4Fe-4S] cluster contacts are provided by C13, C49, C78, C147, C151, and C154. Residues 133–370 (LTPKHYAYLK…MQVQQEISAA (238 aa)) form the Radical SAM core domain. Positions 373 to 443 (QKRIGQTMTV…EYDLFAKLIQ (71 aa)) constitute a TRAM domain.

It belongs to the methylthiotransferase family. RimO subfamily. The cofactor is [4Fe-4S] cluster.

It is found in the cytoplasm. It catalyses the reaction L-aspartate(89)-[ribosomal protein uS12]-hydrogen + (sulfur carrier)-SH + AH2 + 2 S-adenosyl-L-methionine = 3-methylsulfanyl-L-aspartate(89)-[ribosomal protein uS12]-hydrogen + (sulfur carrier)-H + 5'-deoxyadenosine + L-methionine + A + S-adenosyl-L-homocysteine + 2 H(+). In terms of biological role, catalyzes the methylthiolation of an aspartic acid residue of ribosomal protein uS12. The protein is Ribosomal protein uS12 methylthiotransferase RimO of Acinetobacter baylyi (strain ATCC 33305 / BD413 / ADP1).